Consider the following 81-residue polypeptide: Conotoxin Vc6.7 (81 aa).

Residues 1 to 19 (MEKLTILLLVAAVLMSIQA) form the signal peptide. The propeptide occupies 20–44 (VNQEKHQRAKMNLLSKRKPPAERWW). Disulfide bonds link C49/C63, C56/C67, and C62/C72.

The protein belongs to the conotoxin O2 superfamily. In terms of tissue distribution, expressed by the venom duct.

It is found in the secreted. In terms of biological role, inhibits voltage-gated ion channels. In Conus victoriae (Queen Victoria cone), this protein is Conotoxin Vc6.7.